We begin with the raw amino-acid sequence, 1812 residues long: Sperm flagellar protein 2 (1812 aa).

The Calponin-homology (CH) domain maps to 1-105 (MSEILCHWLN…LLYQLYIALQ (105 aa)). 2 coiled-coil regions span residues 178 to 260 (LENF…KDLQ) and 374 to 403 (EERR…EEQA). The segment covering 618–630 (EEKASPVRQESGD) has biased composition (basic and acidic residues). Positions 618 to 658 (EEKASPVRQESGDRSQNLHNVLSAEGTPETEDETRLSTKKT) are disordered. Coiled coils occupy residues 724–750 (LNQA…KKSQ), 803–827 (ENIN…DQIQ), and 868–897 (KEMF…KEEF). The segment covering 879 to 897 (ENKAKKKSEEKEAEKKEEF) has biased composition (basic and acidic residues). 3 disordered regions span residues 879–1002 (ENKA…KPGS), 1272–1322 (EEKE…APVI), and 1793–1812 (EHIQ…EEKK). Pro residues predominate over residues 902 to 913 (ATPPTPPAPPPS). 3 stretches are compositionally biased toward basic and acidic residues: residues 914-929 (EPEK…ERSK), 943-961 (HGNR…ETSP), and 1272-1285 (EEKE…KEKP). Residues 1292-1310 (KKVKKEPPKKKREDKKGKG) are compositionally biased toward basic residues. Residues 1317–1669 (ESAPVITVEE…AEKTSSFIDM (353 aa)) are interaction with IFT20.

As to quaternary structure, interacts (via C-terminus) with IFT20. Interacts with DYNC1I2. In terms of tissue distribution, predominantly expressed in ciliated tissues. Mainly expressed in testis, followed by trachea. Also expressed at lower level in lung, kidney and liver.

The protein resides in the cell projection. Its subcellular location is the cilium. The protein localises to the flagellum. It is found in the cytoplasm. It localises to the golgi apparatus. Functionally, required for correct axoneme development in spermatozoa. Important for normal development of the manchette and sperm head morphology. Essential for male fertility. Plays a role in localization of the intraflagellar transport protein IFT20 to the manchette, suggesting function as an adapter for dynein-mediated protein transport during spermatogenesis. Also plays a role in bone growth where it seems to be required for normal osteoblast differentiation. The chain is Sperm flagellar protein 2 (SPEF2) from Sus scrofa (Pig).